The chain runs to 274 residues: tRNA-cytidine(32) 2-sulfurtransferase (274 aa).

Residues 40–45 (SGGKDS) carry the PP-loop motif motif. Residues Cys-115, Cys-118, and Cys-206 each contribute to the [4Fe-4S] cluster site.

The protein belongs to the TtcA family. As to quaternary structure, homodimer. The cofactor is Mg(2+). It depends on [4Fe-4S] cluster as a cofactor.

The protein resides in the cytoplasm. The enzyme catalyses cytidine(32) in tRNA + S-sulfanyl-L-cysteinyl-[cysteine desulfurase] + AH2 + ATP = 2-thiocytidine(32) in tRNA + L-cysteinyl-[cysteine desulfurase] + A + AMP + diphosphate + H(+). It functions in the pathway tRNA modification. Catalyzes the ATP-dependent 2-thiolation of cytidine in position 32 of tRNA, to form 2-thiocytidine (s(2)C32). The sulfur atoms are provided by the cysteine/cysteine desulfurase (IscS) system. The chain is tRNA-cytidine(32) 2-sulfurtransferase from Ectopseudomonas mendocina (strain ymp) (Pseudomonas mendocina).